The primary structure comprises 422 residues: Putative polyketide beta-ketoacyl synthase 1 (422 aa).

Residues Ser-2–Gly-416 form the Ketosynthase family 3 (KS3) domain. Active-site for beta-ketoacyl synthase activity residues include Cys-169, His-309, and His-346.

Belongs to the thiolase-like superfamily. Beta-ketoacyl-ACP synthases family.

Involved in developmentally regulated synthesis of a compound biosynthetically related to polyketide antibiotics which is essential for spore color in Streptomyces halstedii. The sequence is that of Putative polyketide beta-ketoacyl synthase 1 (sch1) from Streptomyces halstedii.